An 83-amino-acid polypeptide reads, in one-letter code: Delta-conotoxin-like MVIC (83 aa).

A signal peptide spans 1 to 22; sequence MKLTCVMIVAVLFLTTWTFVTA. Residues 23-49 constitute a propeptide that is removed on maturation; it reads DDSRYGLKNLFPKARHEMKNPEASKLN. Intrachain disulfides connect Cys54–Cys69, Cys61–Cys73, and Cys68–Cys78. 4-hydroxyproline occurs at positions 56 and 65.

This sequence belongs to the conotoxin O1 superfamily. In terms of tissue distribution, expressed by the venom duct.

Its subcellular location is the secreted. Functionally, delta-conotoxins bind to site 6 of voltage-gated sodium channels (Nav) and inhibit the inactivation process. In Conus magus (Magical cone), this protein is Delta-conotoxin-like MVIC.